We begin with the raw amino-acid sequence, 309 residues long: 4-hydroxy-3-methylbut-2-enyl diphosphate reductase (309 aa).

Cys-12 contributes to the [4Fe-4S] cluster binding site. Residues His-41 and His-74 each coordinate (2E)-4-hydroxy-3-methylbut-2-enyl diphosphate. Dimethylallyl diphosphate contacts are provided by His-41 and His-74. Isopentenyl diphosphate contacts are provided by His-41 and His-74. Cys-96 contributes to the [4Fe-4S] cluster binding site. Residue His-124 participates in (2E)-4-hydroxy-3-methylbut-2-enyl diphosphate binding. His-124 contributes to the dimethylallyl diphosphate binding site. Residue His-124 participates in isopentenyl diphosphate binding. Residue Glu-126 is the Proton donor of the active site. Thr-167 serves as a coordination point for (2E)-4-hydroxy-3-methylbut-2-enyl diphosphate. Position 197 (Cys-197) interacts with [4Fe-4S] cluster. (2E)-4-hydroxy-3-methylbut-2-enyl diphosphate contacts are provided by Ser-225, Ser-226, Asn-227, and Ser-269. The dimethylallyl diphosphate site is built by Ser-225, Ser-226, Asn-227, and Ser-269. Positions 225, 226, 227, and 269 each coordinate isopentenyl diphosphate.

Belongs to the IspH family. The cofactor is [4Fe-4S] cluster.

The enzyme catalyses isopentenyl diphosphate + 2 oxidized [2Fe-2S]-[ferredoxin] + H2O = (2E)-4-hydroxy-3-methylbut-2-enyl diphosphate + 2 reduced [2Fe-2S]-[ferredoxin] + 2 H(+). It carries out the reaction dimethylallyl diphosphate + 2 oxidized [2Fe-2S]-[ferredoxin] + H2O = (2E)-4-hydroxy-3-methylbut-2-enyl diphosphate + 2 reduced [2Fe-2S]-[ferredoxin] + 2 H(+). Its pathway is isoprenoid biosynthesis; dimethylallyl diphosphate biosynthesis; dimethylallyl diphosphate from (2E)-4-hydroxy-3-methylbutenyl diphosphate: step 1/1. It functions in the pathway isoprenoid biosynthesis; isopentenyl diphosphate biosynthesis via DXP pathway; isopentenyl diphosphate from 1-deoxy-D-xylulose 5-phosphate: step 6/6. Its function is as follows. Catalyzes the conversion of 1-hydroxy-2-methyl-2-(E)-butenyl 4-diphosphate (HMBPP) into a mixture of isopentenyl diphosphate (IPP) and dimethylallyl diphosphate (DMAPP). Acts in the terminal step of the DOXP/MEP pathway for isoprenoid precursor biosynthesis. This is 4-hydroxy-3-methylbut-2-enyl diphosphate reductase from Pseudoalteromonas translucida (strain TAC 125).